We begin with the raw amino-acid sequence, 626 residues long: Janus kinase and microtubule-interacting protein 1 (626 aa).

A mediates association with microtubules region spans residues 1-365 (MSKKGRSKGE…KIKNLTRENV (365 aa)). Coiled coils occupy residues 19 to 254 (VQMA…REAE) and 284 to 413 (ERDV…DDLS). A mediates interaction with TYK2 and GABBR1 region spans residues 365–626 (VEMKEKLSAQ…ILFEPKLKFM (262 aa)). Residue S382 is modified to Phosphoserine. Residues 452-461 (ETLSETSCNT) show a composition bias toward polar residues. The disordered stretch occupies residues 452-480 (ETLSETSCNTDRTDRAPATPEEDLDDTTT). Phosphothreonine is present on T470. Residues 490–604 (QLTREYQALQ…EFRVLELEVR (115 aa)) are a coiled coil.

Belongs to the JAKMIP family. As to quaternary structure, homodimer. Forms a complex with GABBR1 and KIF5B/kinesin-1. Interacts with JAK1 and TYK2. Phosphorylated.

The protein localises to the cytoplasm. The protein resides in the cytoskeleton. It localises to the membrane. In terms of biological role, associates with microtubules and may play a role in the microtubule-dependent transport of the GABA-B receptor. May play a role in JAK1 signaling and regulate microtubule cytoskeleton rearrangements. The chain is Janus kinase and microtubule-interacting protein 1 (JAKMIP1) from Bos taurus (Bovine).